Here is a 400-residue protein sequence, read N- to C-terminus: ATP-dependent RNA helicase Ddx1 (400 aa).

Residues 1 to 60 (DDEADRLLKQGYTDLIERLHKQIPKITSDGCRLQMIVCSATLHAFEVKKMAERLMHFPTW) form the Helicase ATP-binding domain. Residues 2–5 (DEAD) carry the DEAD box motif. A Helicase C-terminal domain is found at 115-316 (TFSQAVKLLK…QVVKSLDVPV (202 aa)).

Belongs to the DEAD box helicase family. DDX1 subfamily.

The enzyme catalyses ATP + H2O = ADP + phosphate + H(+). Its function is as follows. Acts as an ATP-dependent RNA helicase, able to unwind both RNA-RNA and RNA-DNA duplexes. Possesses 5' single-stranded RNA overhang nuclease activity. The protein is ATP-dependent RNA helicase Ddx1 (Ddx1) of Drosophila virilis (Fruit fly).